Here is a 340-residue protein sequence, read N- to C-terminus: Phosphoribosylformylglycinamidine cyclo-ligase (340 aa).

The protein belongs to the AIR synthase family.

It localises to the cytoplasm. It carries out the reaction 2-formamido-N(1)-(5-O-phospho-beta-D-ribosyl)acetamidine + ATP = 5-amino-1-(5-phospho-beta-D-ribosyl)imidazole + ADP + phosphate + H(+). It participates in purine metabolism; IMP biosynthesis via de novo pathway; 5-amino-1-(5-phospho-D-ribosyl)imidazole from N(2)-formyl-N(1)-(5-phospho-D-ribosyl)glycinamide: step 2/2. This chain is Phosphoribosylformylglycinamidine cyclo-ligase, found in Streptococcus pneumoniae (strain Taiwan19F-14).